The chain runs to 210 residues: Uracil phosphoribosyltransferase (210 aa).

5-phospho-alpha-D-ribose 1-diphosphate-binding positions include arginine 80, arginine 105, and 132–140 (DPMLATGGS). Residues isoleucine 195 and 200 to 202 (GDA) contribute to the uracil site. Residue aspartate 201 participates in 5-phospho-alpha-D-ribose 1-diphosphate binding.

Belongs to the UPRTase family. Requires Mg(2+) as cofactor.

The catalysed reaction is UMP + diphosphate = 5-phospho-alpha-D-ribose 1-diphosphate + uracil. It participates in pyrimidine metabolism; UMP biosynthesis via salvage pathway; UMP from uracil: step 1/1. Its activity is regulated as follows. Allosterically activated by GTP. Its function is as follows. Catalyzes the conversion of uracil and 5-phospho-alpha-D-ribose 1-diphosphate (PRPP) to UMP and diphosphate. The sequence is that of Uracil phosphoribosyltransferase from Caldanaerobacter subterraneus subsp. tengcongensis (strain DSM 15242 / JCM 11007 / NBRC 100824 / MB4) (Thermoanaerobacter tengcongensis).